Here is a 322-residue protein sequence, read N- to C-terminus: Cyclin mcs2 (322 aa).

Ser-310 carries the post-translational modification Phosphoserine.

It belongs to the cyclin family. Cyclin C subfamily. In terms of assembly, one of the nine subunits forming the core-TFIIH basal transcription factor. Interacts with crk1 and skp1.

It is found in the nucleus. Functionally, essential for progression through the cell cycle. Possesses kinase activity that can be detected when myelin basic protein (MBP) is provided as an exogenous substrate. In Schizosaccharomyces pombe (strain 972 / ATCC 24843) (Fission yeast), this protein is Cyclin mcs2 (mcs2).